Consider the following 839-residue polypeptide: Probable beta-glucosidase I (839 aa).

N-linked (GlcNAc...) asparagine glycosylation is present at N197. The active site involves D225. A PA14 domain is found at 395 to 555 (DGKKGFSFRV…SQEELIAKAA (161 aa)).

Belongs to the glycosyl hydrolase 3 family.

It localises to the secreted. It carries out the reaction Hydrolysis of terminal, non-reducing beta-D-glucosyl residues with release of beta-D-glucose.. Its pathway is glycan metabolism; cellulose degradation. In terms of biological role, beta-glucosidases are one of a number of cellulolytic enzymes involved in the degradation of cellulosic biomass. Catalyzes the last step releasing glucose from the inhibitory cellobiose. The chain is Probable beta-glucosidase I (bglI) from Aspergillus terreus (strain NIH 2624 / FGSC A1156).